The primary structure comprises 187 residues: Basic helix-loop-helix transcription factor scleraxis (187 aa).

2 disordered regions span residues 21–83 (LSED…TNSV) and 140–163 (AFFHHGGGGGSPPPRDSENSQPKQ). A compositionally biased stretch (basic and acidic residues) spans 34–43 (SDEKPFHLDA). Residues 50 to 72 (AGKRRSGKKAGRLHREPRQRHTA) are compositionally biased toward basic residues. The region spanning 67–119 (RQRHTANARERDRTNSVNTAFTALRTLIPTEPADRKLSKIETLRLASSYISHL) is the bHLH domain.

As to quaternary structure, efficient DNA binding requires dimerization with another bHLH protein. Dimerizes and binds the E-box consensus sequence with E12. Expressed in the intersomitic, the superficial proximomedial limb mesenchyme and the subectodermal mesenchyme.

The protein localises to the nucleus. Plays an early essential role in mesoderm formation, as well as a later role in formation of somite-derived chondrogenic lineages. This is Basic helix-loop-helix transcription factor scleraxis (SCX) from Gallus gallus (Chicken).